Consider the following 461-residue polypeptide: MEKCSHESGRHSAENDGKYDITGSTATNVVDGFTMVAVGDVIVSRALANGHHPGFSEIVELLRAADVTFGNMETLIFDIRSFNGTPQAEYGGAYHVSLPEIGPDLKAMGFNIMGRANNHSLDWGVEGMRETSRILDESGIIHAGVGESRAQASAARLLETARGRVALLSCATSFTPMSRACDPAGEAPARPGVNALRLERSVVVEPDMLESLRKIRDALPNPGPKHDDREMLVLAGTTYRTGKDVGYTYAANTRDLADILRNVRRGKQYSDFCIFTNHAHEPGNWSEEPADFEQALARKLIDAGADAYVGHGPHRLRGIEIYKRRPIFYSLGNFFYDDLRTPVGADMYDVYDKDPQVDTDAEVTAAEETMGYPTAAGFIGALAEPVYYESVVAVSRFEENQLAELRLYPIELGYSKRLANRGVPSLAPRPQAISILERLQRLSEPFGTRITIEDRVGLIRL.

Residues 1–19 (MEKCSHESGRHSAENDGKY) show a composition bias toward basic and acidic residues. The segment at 1 to 21 (MEKCSHESGRHSAENDGKYDI) is disordered.

Belongs to the CapA family.

In terms of biological role, could be involved in the biosynthesis of a cell wall component. This is an uncharacterized protein from Sinorhizobium fredii (strain NBRC 101917 / NGR234).